The sequence spans 494 residues: MASRILMNIKEEVTCPICLELLTEPLSLDCGHSFCQACITANHKKSMLHQGERSCPLCRISYPSENLRPNRHLANIVERLREVMLSPEEGQKVDHCARHGEKLLLFCQQDGNVICWLCERSQEHRGHHTLLVEEVAQTYRENLQVALETMRQKQQDAEKLEADVREEQASWKIQIRDDKTNIMAEFKQLRDILDCEESNELQILEKEEKNILKRLTQSENDMVLQTQSMGVLISDLEHRLQGSVMELLQGVDEVIKRVKNVTLQKPKTFLNEKRRVFRAPDLKGMLQVFKELTEVQRYWVHVTLVPSHLSCAVISEDERQVRYQERIHQSFGKVKYFYGVLGSPSIRSGKHYWEVDVSNKSAWILGVCVSLKCTANRNGPRIENYQPKNGYWVIGLWNAGNYSAFQDSVKYSDFQDGSHSATYGPLIVPLFMTICPNRVGVFLDYEACTVSFFNVTSNGFLIYKFSNCRFSDSVFPYFSPMTCELPMTLCSPRS.

Ala-2 is modified (N-acetylalanine). Residues 15–59 form an RING-type zinc finger; the sequence is CPICLELLTEPLSLDCGHSFCQACITANHKKSMLHQGERSCPLCR. Ser-86 carries the post-translational modification Phosphoserine. Residues 91 to 132 form a B box-type zinc finger; sequence QKVDHCARHGEKLLLFCQQDGNVICWLCERSQEHRGHHTLLV. The Zn(2+) site is built by Cys-96, His-99, Cys-118, and His-124. A coiled-coil region spans residues 132–222; sequence VEEVAQTYRE…KRLTQSENDM (91 aa). Positions 186–199 are required for interaction with GABARAP and for autophagy; the sequence is FKQLRDILDCEESN. The 215-residue stretch at 280 to 494 folds into the B30.2/SPRY domain; sequence PDLKGMLQVF…LPMTLCSPRS (215 aa).

Belongs to the TRIM/RBCC family. As to quaternary structure, can form homodimers and homotrimers. In addition to lower-order dimerization, also exhibits a higher-order multimerization and both low- and high-order multimerizations are essential for its restriction activity. Interacts with BTBD1 and BTBD2. Interacts with PSMC4, PSMC5, PSMD7 and HSPA8/HSC70. Interacts (via B30.2/SPRY domain) with HSPA1A/B. Interacts with PSMC2, MAP3K7/TAK1, TAB2 and TAB3. Interacts with SQSTM1. Interacts with TRIM6 and TRIM34. Interacts with ULK1 (phosphorylated form), GABARAP, GABARAPL1, GABARAPL2, MAP1LC3A, MAP1LC3C and BECN1. In terms of processing, degraded in a proteasome-independent fashion in the absence of viral infection but in a proteasome-dependent fashion following exposure to restriction sensitive virus. Post-translationally, autoubiquitinated in a RING finger- and UBE2D2-dependent manner. Monoubiquitinated by TRIM21. Deubiquitinated by Yersinia YopJ. Ubiquitination may not lead to proteasomal degradation.

It is found in the cytoplasm. It localises to the nucleus. The enzyme catalyses S-ubiquitinyl-[E2 ubiquitin-conjugating enzyme]-L-cysteine + [acceptor protein]-L-lysine = [E2 ubiquitin-conjugating enzyme]-L-cysteine + N(6)-ubiquitinyl-[acceptor protein]-L-lysine.. It participates in protein modification; protein ubiquitination. Capsid-specific restriction factor that prevents infection from non-host-adapted retroviruses. Blocks viral replication early in the life cycle, after viral entry but before reverse transcription. In addition to acting as a capsid-specific restriction factor, also acts as a pattern recognition receptor that activates innate immune signaling in response to the retroviral capsid lattice. Binding to the viral capsid triggers its E3 ubiquitin ligase activity, and in concert with the heterodimeric ubiquitin conjugating enzyme complex UBE2V1-UBE2N (also known as UBC13-UEV1A complex) generates 'Lys-63'-linked polyubiquitin chains, which in turn are catalysts in the autophosphorylation of the MAP3K7/TAK1 complex (includes TAK1, TAB2, and TAB3). Activation of the MAP3K7/TAK1 complex by autophosphorylation results in the induction and expression of NF-kappa-B and MAPK-responsive inflammatory genes, thereby leading to an innate immune response in the infected cell. Plays a role in regulating autophagy through activation of autophagy regulator BECN1 by causing its dissociation from its inhibitors BCL2 and TAB2. The polypeptide is Tripartite motif-containing protein 5 (TRIM5) (Pithecia pithecia (White-faced saki)).